We begin with the raw amino-acid sequence, 241 residues long: Probable transcriptional regulatory protein AZOSEA20720 (241 aa).

Positions 1-21 (MAGHSKWANIQHRKGRQDAKR) are disordered.

The protein belongs to the TACO1 family.

The protein localises to the cytoplasm. The sequence is that of Probable transcriptional regulatory protein AZOSEA20720 from Aromatoleum aromaticum (strain DSM 19018 / LMG 30748 / EbN1) (Azoarcus sp. (strain EbN1)).